The following is a 1396-amino-acid chain: Sterol 3-beta-glucosyltransferase (1396 aa).

Over residues 1–16 (MRPLLDEAKRRVDRRL) the composition is skewed to basic and acidic residues. 3 disordered regions span residues 1-59 (MRPL…TKEG), 82-193 (HARF…AAPV), and 206-233 (SKGSMNQSPRSPPAETQEEQSQEQTSAS). Polar residues predominate over residues 18–28 (ASRQSLSTSRI). Composition is skewed to basic and acidic residues over residues 35 to 44 (ERLKDDHDAQ) and 82 to 108 (HARFDDSSDSERDTDRPPQKRTEKESQ). The span at 156-175 (GSSQRQGGAQTEPSTGNQMS) shows a compositional bias: polar residues. The region spanning 237–288 (LRLMEMFGFESPEKVLVEYACSLVQSMLLQGYMYVTEGHICFYAYLPRKSTV) is the GRAM 1 domain. The PH domain maps to 289-387 (AIKSGYLYKR…WVKSLQKVIF (99 aa)). 2 stretches are compositionally biased toward polar residues: residues 459–479 (QAKNPSRESPQPGRTTPQSRA) and 487–497 (SLTSGLSQVLG). Disordered regions lie at residues 459–531 (QAKN…RDLS) and 576–635 (FRRQ…VQQS). The span at 585–595 (QFGRRHSDETA) shows a compositional bias: basic and acidic residues. The region spanning 719–785 (DRFRAHFALP…KDVENVEKEK (67 aa)) is the GRAM 2 domain. Residues 841 to 880 (EQDESEAAKAEHRMLQEARKDASGGLIPQTPSDESPEIHP) are disordered. Residues 846–862 (EAAKAEHRMLQEARKDA) show a composition bias toward basic and acidic residues. UDP-alpha-D-glucose contacts are provided by serine 907, arginine 908, aspartate 910, alanine 1210, histidine 1212, histidine 1225, glycine 1229, threonine 1230, aspartate 1249, and glutamine 1250.

The protein belongs to the glycosyltransferase 28 family.

The protein resides in the cytoplasm. It is found in the preautophagosomal structure membrane. It carries out the reaction a sterol + UDP-alpha-D-glucose = a sterol 3-beta-D-glucoside + UDP + H(+). The catalysed reaction is ergosterol + UDP-alpha-D-glucose = ergosteryl 3-beta-D-glucoside + UDP + H(+). In terms of biological role, sterol glycosyltransferase responsible for the glycosylation of ergosterol to form ergosterol-glucoside. This chain is Sterol 3-beta-glucosyltransferase, found in Aspergillus terreus (strain NIH 2624 / FGSC A1156).